The primary structure comprises 417 residues: Serine hydroxymethyltransferase (417 aa).

(6S)-5,6,7,8-tetrahydrofolate-binding positions include L122 and 126-128; that span reads GHL. N6-(pyridoxal phosphate)lysine is present on K230. 355–357 contacts (6S)-5,6,7,8-tetrahydrofolate; it reads SPF.

The protein belongs to the SHMT family. As to quaternary structure, homodimer. Requires pyridoxal 5'-phosphate as cofactor.

It localises to the cytoplasm. The enzyme catalyses (6R)-5,10-methylene-5,6,7,8-tetrahydrofolate + glycine + H2O = (6S)-5,6,7,8-tetrahydrofolate + L-serine. Its pathway is one-carbon metabolism; tetrahydrofolate interconversion. It functions in the pathway amino-acid biosynthesis; glycine biosynthesis; glycine from L-serine: step 1/1. Catalyzes the reversible interconversion of serine and glycine with tetrahydrofolate (THF) serving as the one-carbon carrier. This reaction serves as the major source of one-carbon groups required for the biosynthesis of purines, thymidylate, methionine, and other important biomolecules. Also exhibits THF-independent aldolase activity toward beta-hydroxyamino acids, producing glycine and aldehydes, via a retro-aldol mechanism. The polypeptide is Serine hydroxymethyltransferase (Francisella tularensis subsp. holarctica (strain LVS)).